The following is a 346-amino-acid chain: DNA primase small subunit PriS (346 aa).

Active-site residues include D95 and D97. Zn(2+)-binding residues include C106, H108, C114, and C117. The Zinc knuckle motif motif lies at 106-117; the sequence is CEHEPGTVCPIC. D280 is an active-site residue.

The protein belongs to the eukaryotic-type primase small subunit family. As to quaternary structure, heterodimer of a small subunit (PriS) and a large subunit (PriL). Mg(2+) serves as cofactor. Mn(2+) is required as a cofactor.

Its function is as follows. Catalytic subunit of DNA primase, an RNA polymerase that catalyzes the synthesis of short RNA molecules used as primers for DNA polymerase during DNA replication. The small subunit contains the primase catalytic core and has DNA synthesis activity on its own. Binding to the large subunit stabilizes and modulates the activity, increasing the rate of DNA synthesis while decreasing the length of the DNA fragments, and conferring RNA synthesis capability. The DNA polymerase activity may enable DNA primase to also catalyze primer extension after primer synthesis. May also play a role in DNA repair. The polypeptide is DNA primase small subunit PriS (Pyrococcus horikoshii (strain ATCC 700860 / DSM 12428 / JCM 9974 / NBRC 100139 / OT-3)).